Reading from the N-terminus, the 117-residue chain is Immunoglobulin heavy variable 3-11 (117 aa).

The first 19 residues, 1 to 19, serve as a signal peptide directing secretion; the sequence is MEFGLSWVFLVAIIKGVQC. Position 20 is a pyrrolidone carboxylic acid (Gln-20). The framework-1 stretch occupies residues 20 to 44; the sequence is QVQLVESGGGLVKPGGSLRLSCAAS. Residues 20 to 117 form the Ig-like domain; that stretch reads QVQLVESGGG…EDTAVYYCAR (98 aa). The cysteines at positions 41 and 115 are disulfide-linked. Positions 45 to 52 are complementarity-determining-1; that stretch reads GFTFSDYY. Positions 53 to 69 are framework-2; sequence MSWIRQAPGKGLEWVSY. The segment at 70 to 77 is complementarity-determining-2; it reads ISSSSSYT. Positions 78 to 115 are framework-3; that stretch reads NYADSVKGRFTISRDNAKNSLYLQMNSLRAEDTAVYYC. Positions 116 to 117 are complementarity-determining-3; sequence AR.

Immunoglobulins are composed of two identical heavy chains and two identical light chains; disulfide-linked.

It is found in the secreted. The protein resides in the cell membrane. In terms of biological role, v region of the variable domain of immunoglobulin heavy chains that participates in the antigen recognition. Immunoglobulins, also known as antibodies, are membrane-bound or secreted glycoproteins produced by B lymphocytes. In the recognition phase of humoral immunity, the membrane-bound immunoglobulins serve as receptors which, upon binding of a specific antigen, trigger the clonal expansion and differentiation of B lymphocytes into immunoglobulins-secreting plasma cells. Secreted immunoglobulins mediate the effector phase of humoral immunity, which results in the elimination of bound antigens. The antigen binding site is formed by the variable domain of one heavy chain, together with that of its associated light chain. Thus, each immunoglobulin has two antigen binding sites with remarkable affinity for a particular antigen. The variable domains are assembled by a process called V-(D)-J rearrangement and can then be subjected to somatic hypermutations which, after exposure to antigen and selection, allow affinity maturation for a particular antigen. The chain is Immunoglobulin heavy variable 3-11 from Homo sapiens (Human).